Here is a 238-residue protein sequence, read N- to C-terminus: GATA transcription factor 7 (238 aa).

The disordered stretch occupies residues 24–64; it reads TSLESSSSQRKEDEQEREKFKSFSDQSTRLSPPEDLLSFPG. Residues 32 to 45 show a composition bias toward basic and acidic residues; sequence QRKEDEQEREKFKS. The Nuclear localization signal signature appears at 112–119; it reads KPRSKRRR. The GATA-type zinc-finger motif lies at 160-214; it reads QQLRRCCSHCGVQKTPQWRMGPLGAKTLCNACGVRFKSGRLLPEYRPACSPTFTN.

The protein belongs to the type IV zinc-finger family. Class A subfamily.

Its subcellular location is the nucleus. Transcriptional activator that specifically binds 5'-GATA-3' or 5'-GAT-3' motifs within gene promoters. May be involved in the regulation of some light-responsive genes. This Arabidopsis thaliana (Mouse-ear cress) protein is GATA transcription factor 7 (GATA7).